A 178-amino-acid chain; its full sequence is MARLKARYNDELKAKLQEELSIKNVMEIPRITKITLNMGVGAAATDKKLLDGAVADMQLIAGQKPVVTLARKSIAGFKIRDGWPIGCKVTLRGDQMYEFLDRLISIAIPRIRDFRGFSAKSFDGRGNYSMGLKEQIVFPEIDFDKIDRIRGMDITITTTARTDDEGRALMRAFGFPFK.

Belongs to the universal ribosomal protein uL5 family. In terms of assembly, part of the 50S ribosomal subunit; part of the 5S rRNA/L5/L18/L25 subcomplex. Contacts the 5S rRNA and the P site tRNA. Forms a bridge to the 30S subunit in the 70S ribosome.

In terms of biological role, this is one of the proteins that bind and probably mediate the attachment of the 5S RNA into the large ribosomal subunit, where it forms part of the central protuberance. In the 70S ribosome it contacts protein S13 of the 30S subunit (bridge B1b), connecting the 2 subunits; this bridge is implicated in subunit movement. Contacts the P site tRNA; the 5S rRNA and some of its associated proteins might help stabilize positioning of ribosome-bound tRNAs. In Acinetobacter baumannii (strain AB0057), this protein is Large ribosomal subunit protein uL5.